A 206-amino-acid chain; its full sequence is N-(5'-phosphoribosyl)anthranilate isomerase (206 aa).

Belongs to the TrpF family.

It carries out the reaction N-(5-phospho-beta-D-ribosyl)anthranilate = 1-(2-carboxyphenylamino)-1-deoxy-D-ribulose 5-phosphate. It functions in the pathway amino-acid biosynthesis; L-tryptophan biosynthesis; L-tryptophan from chorismate: step 3/5. The polypeptide is N-(5'-phosphoribosyl)anthranilate isomerase (Chlamydia felis (strain Fe/C-56) (Chlamydophila felis)).